Reading from the N-terminus, the 371-residue chain is Deoxyhypusine synthase (371 aa).

NAD(+) is bound by residues 107–111, 133–135, E139, and D240; these read SNLIS and TTG. 138-139 provides a ligand contact to spermidine; the sequence is EE. D245 lines the spermidine pocket. An NAD(+)-binding site is contributed by G287. Position 292 (H292) interacts with spermidine. Residue 312 to 313 participates in NAD(+) binding; it reads TA. Spermidine contacts are provided by residues 318-320 and 327-333; these read GSD and EAVSWGK. The active-site Nucleophile is K333. Residue 346–347 coordinates NAD(+); sequence DA.

The protein belongs to the deoxyhypusine synthase family. NAD(+) serves as cofactor. In terms of tissue distribution, expressed in shoot tips.

The catalysed reaction is [eIF5A protein]-L-lysine + spermidine = [eIF5A protein]-deoxyhypusine + propane-1,3-diamine. It functions in the pathway protein modification; eIF5A hypusination. In terms of biological role, catalyzes the NAD-dependent oxidative cleavage of spermidine and the subsequent transfer of the butylamine moiety of spermidine to the epsilon-amino group of a specific lysine residue of the eIF-5A precursor protein to form the intermediate deoxyhypusine residue. Also able to produce homospermidine from putrescine. The protein is Deoxyhypusine synthase (DHS1) of Senecio vernalis (Spring groundsel).